Reading from the N-terminus, the 384-residue chain is 8-amino-7-oxononanoate synthase (384 aa).

Arg-21 serves as a coordination point for substrate. 108 to 109 contributes to the pyridoxal 5'-phosphate binding site; it reads GF. Residue His-133 coordinates substrate. Ser-179, His-207, and Thr-233 together coordinate pyridoxal 5'-phosphate. Position 236 is an N6-(pyridoxal phosphate)lysine (Lys-236). Thr-352 is a binding site for substrate.

The protein belongs to the class-II pyridoxal-phosphate-dependent aminotransferase family. BioF subfamily. Homodimer. The cofactor is pyridoxal 5'-phosphate.

The enzyme catalyses 6-carboxyhexanoyl-[ACP] + L-alanine + H(+) = (8S)-8-amino-7-oxononanoate + holo-[ACP] + CO2. It functions in the pathway cofactor biosynthesis; biotin biosynthesis. Functionally, catalyzes the decarboxylative condensation of pimeloyl-[acyl-carrier protein] and L-alanine to produce 8-amino-7-oxononanoate (AON), [acyl-carrier protein], and carbon dioxide. This chain is 8-amino-7-oxononanoate synthase, found in Shigella flexneri serotype 5b (strain 8401).